The sequence spans 96 residues: Protein FPV129 (96 aa).

2 helical membrane passes run 36 to 56 (IILD…FVII) and 71 to 91 (LFLL…LYIV).

It belongs to the chordopoxvirinae L2 family.

Its subcellular location is the virion membrane. It localises to the host cytoplasm. Functionally, early protein involved in early virion morphogenesis. Participates in the formation and elongation of crescent-shaped membrane precursors of immature virions in cytoplasmic factories. In Vertebrata (FPV), this protein is Protein FPV129.